We begin with the raw amino-acid sequence, 397 residues long: Elongation factor Tu (397 aa).

The region spanning 10 to 207 is the tr-type G domain; the sequence is KPHCNIGTIG…AVDEWIPQPE (198 aa). A G1 region spans residues 19–26; the sequence is GHVDHGKT. 19-26 provides a ligand contact to GTP; that stretch reads GHVDHGKT. A Mg(2+)-binding site is contributed by Thr26. A G2 region spans residues 61 to 65; that stretch reads GITIS. The tract at residues 82-85 is G3; that stretch reads DCPG. GTP-binding positions include 82–86 and 137–140; these read DCPGH and NKVD. A G4 region spans residues 137 to 140; that stretch reads NKVD. The interval 175 to 177 is G5; the sequence is SAL.

Belongs to the TRAFAC class translation factor GTPase superfamily. Classic translation factor GTPase family. EF-Tu/EF-1A subfamily. As to quaternary structure, monomer.

It is found in the cytoplasm. The enzyme catalyses GTP + H2O = GDP + phosphate + H(+). Its function is as follows. GTP hydrolase that promotes the GTP-dependent binding of aminoacyl-tRNA to the A-site of ribosomes during protein biosynthesis. The chain is Elongation factor Tu from Sphingopyxis alaskensis (strain DSM 13593 / LMG 18877 / RB2256) (Sphingomonas alaskensis).